Consider the following 352-residue polypeptide: DNA polymerase IV (352 aa).

One can recognise a UmuC domain in the interval 4–185 (IIHVDMDCFY…LPLEKIPGVG (182 aa)). Aspartate 8 and aspartate 103 together coordinate Mg(2+). Residue glutamate 104 is part of the active site.

The protein belongs to the DNA polymerase type-Y family. As to quaternary structure, monomer. It depends on Mg(2+) as a cofactor.

It is found in the cytoplasm. It carries out the reaction DNA(n) + a 2'-deoxyribonucleoside 5'-triphosphate = DNA(n+1) + diphosphate. Functionally, poorly processive, error-prone DNA polymerase involved in untargeted mutagenesis. Copies undamaged DNA at stalled replication forks, which arise in vivo from mismatched or misaligned primer ends. These misaligned primers can be extended by PolIV. Exhibits no 3'-5' exonuclease (proofreading) activity. May be involved in translesional synthesis, in conjunction with the beta clamp from PolIII. This chain is DNA polymerase IV, found in Pectobacterium atrosepticum (strain SCRI 1043 / ATCC BAA-672) (Erwinia carotovora subsp. atroseptica).